Consider the following 140-residue polypeptide: MKVFSTVLLAIVACCAVAEAKTFGKCELAKALANNGIAKASLPDWVCLVQNESAFSTSATNKNKNGSTDYGIFQINNKYWCDSGYGSNDCKIACKNLLNDDITDDIKCAKLIHKRHGFNAWYGWKNHCNGKKLPNVSSCF.

The first 20 residues, 1-20, serve as a signal peptide directing secretion; it reads MKVFSTVLLAIVACCAVAEA. One can recognise a C-type lysozyme domain in the interval 21–140; the sequence is KTFGKCELAK…KKLPNVSSCF (120 aa). 4 cysteine pairs are disulfide-bonded: Cys-26-Cys-139, Cys-47-Cys-128, Cys-81-Cys-94, and Cys-90-Cys-108. Catalysis depends on residues Glu-52 and Asp-69.

Belongs to the glycosyl hydrolase 22 family. Expressed in salivary glands and Malpighian tubules.

The catalysed reaction is Hydrolysis of (1-&gt;4)-beta-linkages between N-acetylmuramic acid and N-acetyl-D-glucosamine residues in a peptidoglycan and between N-acetyl-D-glucosamine residues in chitodextrins.. Functionally, lysozymes have primarily a bacteriolytic function; those in tissues and body fluids are associated with the monocyte-macrophage system and enhance the activity of immunoagents. The polypeptide is Lysozyme c-1 (Anopheles gambiae (African malaria mosquito)).